A 398-amino-acid polypeptide reads, in one-letter code: Acetate kinase (398 aa).

Residue Asn7 coordinates Mg(2+). Lys14 provides a ligand contact to ATP. Residue Arg91 participates in substrate binding. The active-site Proton donor/acceptor is Asp148. ATP is bound by residues 208–212 (HLGNG), 283–285 (DFR), and 331–335 (GLGEN). Glu384 contacts Mg(2+).

It belongs to the acetokinase family. As to quaternary structure, homodimer. It depends on Mg(2+) as a cofactor. Mn(2+) is required as a cofactor.

It localises to the cytoplasm. It carries out the reaction acetate + ATP = acetyl phosphate + ADP. It functions in the pathway metabolic intermediate biosynthesis; acetyl-CoA biosynthesis; acetyl-CoA from acetate: step 1/2. Its function is as follows. Catalyzes the formation of acetyl phosphate from acetate and ATP. Can also catalyze the reverse reaction. The chain is Acetate kinase from Natranaerobius thermophilus (strain ATCC BAA-1301 / DSM 18059 / JW/NM-WN-LF).